The sequence spans 227 residues: MEALKKIAGVTAAQYVTDGMTIGLGTGSTAYYFVEEIGRRVKQEGLQVVGVTTSSVTSKQAEGLGIPLKSIDDIDSIDLTVDGADEVDKDFNGIKGGGAALLMEKIVATPTKEYIWVVDASKMVEHLGAFKLPVEVVQYGADRLFRVFEKAGYKPSFRMKGDSRLVTDMQNYIIDLDLGCIKDPVAFGHLLDGTVGVVEHGLFNGMVDKVIVASKDGVTVLEAPKAS.

Substrate contacts are provided by residues 26 to 29 (TGST), 82 to 85 (DGAD), and 95 to 98 (KGGG). Glu-104 (proton acceptor) is an active-site residue. Lys-122 serves as a coordination point for substrate.

This sequence belongs to the ribose 5-phosphate isomerase family. In terms of assembly, homodimer.

The enzyme catalyses aldehydo-D-ribose 5-phosphate = D-ribulose 5-phosphate. The protein operates within carbohydrate degradation; pentose phosphate pathway; D-ribose 5-phosphate from D-ribulose 5-phosphate (non-oxidative stage): step 1/1. Catalyzes the reversible conversion of ribose-5-phosphate to ribulose 5-phosphate. The protein is Ribose-5-phosphate isomerase A of Streptococcus pyogenes serotype M2 (strain MGAS10270).